We begin with the raw amino-acid sequence, 548 residues long: Chaperonin GroEL (548 aa).

ATP contacts are provided by residues 30–33 (TLGP), lysine 51, 87–91 (DGTTT), glycine 415, 479–481 (NAA), and aspartate 495. The disordered stretch occupies residues 524–548 (LPKEDKSSDSSSSPAGGMGGMGGMM). Positions 539–548 (GGMGGMGGMM) are enriched in gly residues.

The protein belongs to the chaperonin (HSP60) family. Forms a cylinder of 14 subunits composed of two heptameric rings stacked back-to-back. Interacts with the co-chaperonin GroES.

Its subcellular location is the cytoplasm. It catalyses the reaction ATP + H2O + a folded polypeptide = ADP + phosphate + an unfolded polypeptide.. Its function is as follows. Together with its co-chaperonin GroES, plays an essential role in assisting protein folding. The GroEL-GroES system forms a nano-cage that allows encapsulation of the non-native substrate proteins and provides a physical environment optimized to promote and accelerate protein folding. The polypeptide is Chaperonin GroEL (Buchnera aphidicola subsp. Acyrthosiphon pisum (strain 5A)).